A 291-amino-acid polypeptide reads, in one-letter code: MLRARPALWAAALTALTLLRGPPAARAGAGTMGAGPVVRCEPCDARAVAQCAPPPPSPPCAELVREPGCGCCLTCALREGQPCGVYTERCGSGLRCQPPPGDPRPLQALLDGRGLCANASAVGRLRPYLLPSASGNGSESEEDHSMGSTENQAGPSTHRVPVSKFHPIHTKMDVIKKGHAKDSQRYKVDYESQSTDTQNFSSESKRETEYGPCRREMEDTLNHLKFLNMLSPRGIHIPNCDKKGFYKKKQCRPSKGRKRGFCWCVDKYGQPLPGFDVKGKGDVHCYSMESK.

The N-terminal stretch at 1-27 (MLRARPALWAAALTALTLLRGPPAARA) is a signal peptide. Residues 28–134 (GAGTMGAGPV…LRPYLLPSAS (107 aa)) form an IGF-binding region. Positions 36 to 119 (PVVRCEPCDA…LDGRGLCANA (84 aa)) constitute an IGFBP N-terminal domain. 6 cysteine pairs are disulfide-bonded: C40-C69, C43-C71, C51-C72, C60-C75, C83-C96, and C90-C116. Residues N118 and N136 are each glycosylated (N-linked (GlcNAc...) asparagine). 2 disordered regions span residues 132-162 (SASGNGSESEEDHSMGSTENQAGPSTHRVPV) and 177-211 (KGHAKDSQRYKVDYESQSTDTQNFSSESKRETEYG). Residues 146–155 (MGSTENQAGP) show a composition bias toward polar residues. S148 is modified (phosphoserine). A compositionally biased stretch (basic and acidic residues) spans 177 to 190 (KGHAKDSQRYKVDY). A compositionally biased stretch (polar residues) spans 191-202 (ESQSTDTQNFSS). N199 carries an N-linked (GlcNAc...) asparagine glycan. Position 201 is a phosphoserine (S201). The Thyroglobulin type-1 domain occupies 210–285 (YGPCRREMED…DVKGKGDVHC (76 aa)). 3 disulfides stabilise this stretch: C213–C240, C251–C262, and C264–C285.

In terms of assembly, interacts with XLKD1. Binds IGF2 more than IGF1. Forms a ternary complex of about 140 to 150 kDa with IGF1 or IGF2 and a 85 kDa glycoprotein (ALS). Interacts with humanin; humanin competes with importin KPNB1 for binding to IGFBP3, blocking IGFBP3 nuclear import and IGFBP3-mediated apoptosis. Interacts with TMEM219. Interacts with RXRA; this interaction modulates the transcriptional activity of RXRA. Interacts with LRP1; this interaction mediates cell growth inhibition independent of IGF1. Post-translationally, phosphorylated by FAM20C in the extracellular medium. Phosphorylated by CK2; resulting in decreased nuclear localization. In terms of tissue distribution, plasma; expressed by most tissues.

Its subcellular location is the secreted. The protein resides in the nucleus. Functionally, multifunctional protein that plays a critical role in regulating the availability of IGFs such as IGF1 and IGF2 to their receptors and thereby regulates IGF-mediated cellular processes including proliferation, differentiation, and apoptosis in a cell-type specific manner. Also exhibits IGF-independent antiproliferative and apoptotic effects mediated by its receptor TMEM219/IGFBP-3R. Inhibits the positive effect of humanin on insulin sensitivity. Promotes testicular germ cell apoptosis. Acts via LRP-1/alpha2M receptor, also known as TGF-beta type V receptor, to mediate cell growth inhibition independent of IGF1. Mechanistically, induces serine-specific dephosphorylation of IRS1 or IRS2 upon ligation to its receptor, leading to the inhibitory cascade. In the nucleus, interacts with transcription factors such as retinoid X receptor-alpha/RXRA to regulate transcriptional signaling and apoptosis. The sequence is that of Insulin-like growth factor-binding protein 3 (IGFBP3) from Bos taurus (Bovine).